A 122-amino-acid polypeptide reads, in one-letter code: Large ribosomal subunit protein uL14 (122 aa).

This sequence belongs to the universal ribosomal protein uL14 family. Part of the 50S ribosomal subunit. Forms a cluster with proteins L3 and L19. In the 70S ribosome, L14 and L19 interact and together make contacts with the 16S rRNA in bridges B5 and B8.

In terms of biological role, binds to 23S rRNA. Forms part of two intersubunit bridges in the 70S ribosome. This chain is Large ribosomal subunit protein uL14, found in Staphylococcus carnosus (strain TM300).